Consider the following 399-residue polypeptide: Transcription termination factor 1, mitochondrial (399 aa).

Residues 1–57 constitute a mitochondrion transit peptide; it reads MQSLSLGQTSISKGLNYLTIMAPGNLWHMRNNFLFGSRCWMTRFSAENIFKSVSFRL. Interaction with DNA regions lie at residues 169–170, 247–251, 324–331, 355–358, and 384–391; these read RS, QSTKR, AEKKFNDK, SIST, and SKKRYEAK.

Belongs to the mTERF family. As to quaternary structure, monomer. Post-translationally, phosphoprotein with mostly four phosphate groups. While the DNA-binding activity is unaffected by the phosphorylation state, only the phosphorylated form of the protein is active for termination activity. Functioning seems to be regulated by phosphorylation.

The protein resides in the mitochondrion. Transcription termination factor. Binds to a 28 bp region within the tRNA(Leu(uur)) gene at a position immediately adjacent to and downstream of the 16S rRNA gene; this region comprises a tridecamer sequence critical for directing accurate termination. Binds DNA along the major grove and promotes DNA bending and partial unwinding. Promotes base flipping. Transcription termination activity appears to be polarized with highest specificity for transcripts initiated on the light strand. This chain is Transcription termination factor 1, mitochondrial (MTERF1), found in Homo sapiens (Human).